Here is a 101-residue protein sequence, read N- to C-terminus: MIGLEHYLTVAATLFVIGIFGLFLNRKNVIVLLMSIELMLLAVNINLVAFSSFLGDLVGQVFTLFVLTVAAAEAAIGLAILVCFFRNRGTIDVEDVNVMKG.

The next 3 membrane-spanning stretches (helical) occupy residues 4-24, 30-50, and 65-85; these read LEHY…GLFL, IVLL…LVAF, and FVLT…VCFF.

The protein belongs to the complex I subunit 4L family. As to quaternary structure, NDH-1 is composed of 14 different subunits. Subunits NuoA, H, J, K, L, M, N constitute the membrane sector of the complex.

It is found in the cell inner membrane. The enzyme catalyses a quinone + NADH + 5 H(+)(in) = a quinol + NAD(+) + 4 H(+)(out). Its function is as follows. NDH-1 shuttles electrons from NADH, via FMN and iron-sulfur (Fe-S) centers, to quinones in the respiratory chain. The immediate electron acceptor for the enzyme in this species is believed to be ubiquinone. Couples the redox reaction to proton translocation (for every two electrons transferred, four hydrogen ions are translocated across the cytoplasmic membrane), and thus conserves the redox energy in a proton gradient. This chain is NADH-quinone oxidoreductase subunit K, found in Ruegeria pomeroyi (strain ATCC 700808 / DSM 15171 / DSS-3) (Silicibacter pomeroyi).